Here is a 306-residue protein sequence, read N- to C-terminus: Putative lipid kinase Sca_1050 (306 aa).

The region spanning 3–139 (QHFHRGILFY…FDVLKVNDTY (137 aa)) is the DAGKc domain. Residues Ser44, 74–80 (GDGTVNE), and Thr101 contribute to the ATP site. Ser220, Asp223, and Glu225 together coordinate Mg(2+). Glu281 serves as the catalytic Proton acceptor.

This sequence belongs to the diacylglycerol/lipid kinase family. Mg(2+) serves as cofactor.

May catalyze the ATP-dependent phosphorylation of lipids other than diacylglycerol (DAG). This Staphylococcus carnosus (strain TM300) protein is Putative lipid kinase Sca_1050.